A 688-amino-acid chain; its full sequence is Glycine--tRNA ligase beta subunit (688 aa).

It belongs to the class-II aminoacyl-tRNA synthetase family. Tetramer of two alpha and two beta subunits.

The protein localises to the cytoplasm. It catalyses the reaction tRNA(Gly) + glycine + ATP = glycyl-tRNA(Gly) + AMP + diphosphate. The polypeptide is Glycine--tRNA ligase beta subunit (Shewanella sp. (strain ANA-3)).